We begin with the raw amino-acid sequence, 161 residues long: Putative pre-16S rRNA nuclease (161 aa).

Belongs to the YqgF nuclease family.

It localises to the cytoplasm. Could be a nuclease involved in processing of the 5'-end of pre-16S rRNA. The polypeptide is Putative pre-16S rRNA nuclease (Bradyrhizobium sp. (strain ORS 278)).